The chain runs to 50 residues: Bacteriocin-like protein SboX (50 aa).

This is Bacteriocin-like protein SboX (sboX) from Bacillus subtilis (strain 168).